The following is a 220-amino-acid chain: Uracil-DNA glycosylase (220 aa).

Asp-60 acts as the Proton acceptor in catalysis.

Belongs to the uracil-DNA glycosylase (UDG) superfamily. UNG family.

The protein localises to the cytoplasm. The enzyme catalyses Hydrolyzes single-stranded DNA or mismatched double-stranded DNA and polynucleotides, releasing free uracil.. In terms of biological role, excises uracil residues from the DNA which can arise as a result of misincorporation of dUMP residues by DNA polymerase or due to deamination of cytosine. The sequence is that of Uracil-DNA glycosylase from Francisella tularensis subsp. novicida (strain U112).